The sequence spans 548 residues: MKKVTAMLFSMAVGLNAVSMAAKAKASEEQETDVLLIGGGIMSATLGTYLRELEPEWSMTMVERLEGVAQESSNGWNNAGTGHSALMELNYTPQNADGSISIEKAVAINEAFQISRQFWAHQVERGVLRTPRSFINTVPHMSFVWGEDNVNFLRARYAALQQSSLFRGMRYSEDHAQIKEWAPLVMEGRDPQQKVAATRTEIGTDVNYGEITRQLIASLQKKSNFSLQLSSEVRALKRNDDNTWTVTVADLKNGTAQNIRAKFVFIGAGGAALKLLQESGIPEAKDYAGFPVGGQFLVSENPDVVNHHLAKVYGKASVGAPPMSVPHIDTRVLDGKRVVLFGPFATFSTKFLKNGSLWDLMSSTTTSNVMPMMHVGLDNFDLVKYLVSQVMLSEEDRFEALKEYYPQAKKEDWRLWQAGQRVQIIKRDADKGGVLRLGTEVVSDQQGTIAALLGASPGASTAAPIMLNLLEKVFGDRVSSPQWQATLKAIVPSYGRKLNGDVAATERELQYTSEVLGLKYDKPQAADSTPKPQLKPQPVQKEVADIAL.

The interval 521-548 is disordered; that stretch reads DKPQAADSTPKPQLKPQPVQKEVADIAL. Residues 530–541 show a composition bias toward low complexity; the sequence is PKPQLKPQPVQK.

The protein belongs to the MQO family. Requires FAD as cofactor.

It carries out the reaction (S)-malate + a quinone = a quinol + oxaloacetate. Its pathway is carbohydrate metabolism; tricarboxylic acid cycle; oxaloacetate from (S)-malate (quinone route): step 1/1. The sequence is that of Probable malate:quinone oxidoreductase from Escherichia coli (strain UTI89 / UPEC).